The primary structure comprises 521 residues: Phosphoenolpyruvate carboxykinase (ATP) (521 aa).

Substrate is bound by residues Arg52, Tyr186, and Lys192. Residues Lys192, His211, and 227–235 (GLSGTGKTT) each bind ATP. 2 residues coordinate Mn(2+): Lys192 and His211. Residue Asp248 coordinates Mn(2+). Residues Glu276, Arg313, 432 to 433 (RI), and Thr438 contribute to the ATP site. Arg313 serves as a coordination point for substrate.

Belongs to the phosphoenolpyruvate carboxykinase (ATP) family. Mn(2+) is required as a cofactor.

The protein resides in the cytoplasm. The catalysed reaction is oxaloacetate + ATP = phosphoenolpyruvate + ADP + CO2. It functions in the pathway carbohydrate biosynthesis; gluconeogenesis. Involved in the gluconeogenesis. Catalyzes the conversion of oxaloacetate (OAA) to phosphoenolpyruvate (PEP) through direct phosphoryl transfer between the nucleoside triphosphate and OAA. This chain is Phosphoenolpyruvate carboxykinase (ATP), found in Caldanaerobacter subterraneus subsp. tengcongensis (strain DSM 15242 / JCM 11007 / NBRC 100824 / MB4) (Thermoanaerobacter tengcongensis).